The primary structure comprises 163 residues: NADH-quinone oxidoreductase subunit B (163 aa).

The [4Fe-4S] cluster site is built by Cys-32, Cys-33, Cys-98, and Cys-127.

The protein belongs to the complex I 20 kDa subunit family. As to quaternary structure, NDH-1 is composed of 14 different subunits. Subunits NuoB, C, D, E, F, and G constitute the peripheral sector of the complex. [4Fe-4S] cluster is required as a cofactor.

The protein localises to the cell inner membrane. The enzyme catalyses a quinone + NADH + 5 H(+)(in) = a quinol + NAD(+) + 4 H(+)(out). NDH-1 shuttles electrons from NADH, via FMN and iron-sulfur (Fe-S) centers, to quinones in the respiratory chain. Couples the redox reaction to proton translocation (for every two electrons transferred, four hydrogen ions are translocated across the cytoplasmic membrane), and thus conserves the redox energy in a proton gradient. The chain is NADH-quinone oxidoreductase subunit B from Pelobacter propionicus (strain DSM 2379 / NBRC 103807 / OttBd1).